The following is a 562-amino-acid chain: Putative transport protein YPA_0617 (562 aa).

6 helical membrane-spanning segments follow: residues 8-28 (LLNG…LCLG), 37-57 (LGNA…HFAI), 66-86 (FMLF…SIFF), 94-114 (MLAL…GKLF), 118-138 (IGLT…LVGA), and 158-178 (NLSL…ILGA). 2 consecutive RCK C-terminal domains span residues 202 to 288 (LDTD…SFRN) and 290 to 373 (KEVF…KIGF). A run of 5 helical transmembrane segments spans residues 383-403 (LLAF…TFQF), 406-426 (FSFG…LGFL), 447-467 (FGLM…INSS), 475-495 (MLIS…VFGA), and 541-561 (IANV…PGIL).

The protein belongs to the AAE transporter (TC 2.A.81) family. YbjL subfamily.

It localises to the cell membrane. The polypeptide is Putative transport protein YPA_0617 (Yersinia pestis bv. Antiqua (strain Antiqua)).